We begin with the raw amino-acid sequence, 303 residues long: Signal recognition particle receptor FtsY (303 aa).

Residues 108–115 (GVNGAGKT), 190–194 (DTAGR), and 254–257 (TKLD) contribute to the GTP site.

It belongs to the GTP-binding SRP family. FtsY subfamily. Part of the signal recognition particle protein translocation system, which is composed of SRP and FtsY. SRP is a ribonucleoprotein composed of Ffh and a 4.5S RNA molecule.

The protein resides in the cell inner membrane. Its subcellular location is the cytoplasm. The catalysed reaction is GTP + H2O = GDP + phosphate + H(+). Involved in targeting and insertion of nascent membrane proteins into the cytoplasmic membrane. Acts as a receptor for the complex formed by the signal recognition particle (SRP) and the ribosome-nascent chain (RNC). Interaction with SRP-RNC leads to the transfer of the RNC complex to the Sec translocase for insertion into the membrane, the hydrolysis of GTP by both Ffh and FtsY, and the dissociation of the SRP-FtsY complex into the individual components. This is Signal recognition particle receptor FtsY from Rickettsia conorii (strain ATCC VR-613 / Malish 7).